A 105-amino-acid polypeptide reads, in one-letter code: NADH-quinone oxidoreductase subunit K (105 aa).

3 helical membrane-spanning segments follow: residues 9–29 (PNYY…GVLV), 34–54 (IVLF…LVTF), and 65–85 (IMAF…LAII).

Belongs to the complex I subunit 4L family. As to quaternary structure, NDH-1 is composed of 14 different subunits. Subunits NuoA, H, J, K, L, M, N constitute the membrane sector of the complex.

It localises to the cell membrane. The catalysed reaction is a quinone + NADH + 5 H(+)(in) = a quinol + NAD(+) + 4 H(+)(out). Its function is as follows. NDH-1 shuttles electrons from NADH, via FMN and iron-sulfur (Fe-S) centers, to quinones in the respiratory chain. The immediate electron acceptor for the enzyme in this species is believed to be a menaquinone. Couples the redox reaction to proton translocation (for every two electrons transferred, four hydrogen ions are translocated across the cytoplasmic membrane), and thus conserves the redox energy in a proton gradient. This chain is NADH-quinone oxidoreductase subunit K, found in Salinispora tropica (strain ATCC BAA-916 / DSM 44818 / JCM 13857 / NBRC 105044 / CNB-440).